A 211-amino-acid polypeptide reads, in one-letter code: Receptor expression-enhancing protein 6 (211 aa).

2 consecutive transmembrane segments (helical) span residues 44–64 (LSLYLLFGYGASLLCNLIGFV) and 89–109 (WVVYALFGLAEFFSDLLLSWF). Positions 190 to 211 (AGPSTPLEADLKPSQTPQPKDK) are disordered. The segment covering 202–211 (PSQTPQPKDK) has biased composition (polar residues).

Belongs to the DP1 family. In terms of assembly, interacts with STX3. Interacts with clathrin. As to expression, expressed in circumvallate papillae and testis. Expressed in the retina. Isoform 1 is predominantly present in mature optic cups. Isoform 1 expression is confined to the cell body and inner segment of developing rod photoreceptor cells.

Its subcellular location is the endoplasmic reticulum membrane. The protein resides in the cytoplasmic vesicle. It localises to the clathrin-coated vesicle membrane. Required for correct function and survival of retinal photoreceptors. Required for retinal development. In rod photoreceptors, facilitates stability and/or trafficking of guanylate cyclases and is required to maintain endoplasmic reticulum and mitochondrial homeostasis. May play a role in clathrin-coated intracellular vesicle trafficking of proteins from the endoplasmic reticulum to the retinal rod plasma membrane. In Homo sapiens (Human), this protein is Receptor expression-enhancing protein 6 (REEP6).